A 267-amino-acid polypeptide reads, in one-letter code: 4-hydroxy-tetrahydrodipicolinate reductase (267 aa).

Residues 12-17, 100-102, and 126-129 each bind NAD(+); these read GPRGRM, GTT, and APNF. H156 acts as the Proton donor/acceptor in catalysis. Residue H157 participates in (S)-2,3,4,5-tetrahydrodipicolinate binding. The active-site Proton donor is K160. Residue 166 to 167 participates in (S)-2,3,4,5-tetrahydrodipicolinate binding; sequence GT.

It belongs to the DapB family.

The protein resides in the cytoplasm. The enzyme catalyses (S)-2,3,4,5-tetrahydrodipicolinate + NAD(+) + H2O = (2S,4S)-4-hydroxy-2,3,4,5-tetrahydrodipicolinate + NADH + H(+). It carries out the reaction (S)-2,3,4,5-tetrahydrodipicolinate + NADP(+) + H2O = (2S,4S)-4-hydroxy-2,3,4,5-tetrahydrodipicolinate + NADPH + H(+). It functions in the pathway amino-acid biosynthesis; L-lysine biosynthesis via DAP pathway; (S)-tetrahydrodipicolinate from L-aspartate: step 4/4. In terms of biological role, catalyzes the conversion of 4-hydroxy-tetrahydrodipicolinate (HTPA) to tetrahydrodipicolinate. The chain is 4-hydroxy-tetrahydrodipicolinate reductase from Bacillus subtilis (strain 168).